The primary structure comprises 579 residues: 2-succinyl-5-enolpyruvyl-6-hydroxy-3-cyclohexene-1-carboxylate synthase (579 aa).

The protein belongs to the TPP enzyme family. MenD subfamily. In terms of assembly, homodimer. Requires Mg(2+) as cofactor. Mn(2+) serves as cofactor. It depends on thiamine diphosphate as a cofactor.

The enzyme catalyses isochorismate + 2-oxoglutarate + H(+) = 5-enolpyruvoyl-6-hydroxy-2-succinyl-cyclohex-3-ene-1-carboxylate + CO2. It functions in the pathway quinol/quinone metabolism; 1,4-dihydroxy-2-naphthoate biosynthesis; 1,4-dihydroxy-2-naphthoate from chorismate: step 2/7. The protein operates within quinol/quinone metabolism; menaquinone biosynthesis. Catalyzes the thiamine diphosphate-dependent decarboxylation of 2-oxoglutarate and the subsequent addition of the resulting succinic semialdehyde-thiamine pyrophosphate anion to isochorismate to yield 2-succinyl-5-enolpyruvyl-6-hydroxy-3-cyclohexene-1-carboxylate (SEPHCHC). The polypeptide is 2-succinyl-5-enolpyruvyl-6-hydroxy-3-cyclohexene-1-carboxylate synthase (Oceanobacillus iheyensis (strain DSM 14371 / CIP 107618 / JCM 11309 / KCTC 3954 / HTE831)).